The following is a 756-amino-acid chain: Ribonucleoside-diphosphate reductase subunit alpha (756 aa).

Positions 5 to 95 (LMVTKRDGTQ…IFHLRKKAYG (91 aa)) constitute an ATP-cone domain. ATP is bound by residues K9, 15-21 (EQINLDK), T55, and K91. Residue T209 participates in GDP binding. Residues C225 and C462 are joined by a disulfide bond. DTTP-binding positions include 232–234 (DSL), R262, and R269. Residue N437 participates in GDP binding. Residue N437 is the Proton acceptor of the active site. Catalysis depends on C439, which acts as the Cysteine radical intermediate. GDP-binding positions include E441 and 623-625 (ETS). The Proton acceptor role is filled by E441.

The protein belongs to the ribonucleoside diphosphate reductase large chain family. In terms of assembly, tetramer of two alpha and two beta subunits.

The enzyme catalyses a 2'-deoxyribonucleoside 5'-diphosphate + [thioredoxin]-disulfide + H2O = a ribonucleoside 5'-diphosphate + [thioredoxin]-dithiol. With respect to regulation, under complex allosteric control mediated by deoxynucleoside triphosphates and ATP binding to separate specificity and activation sites on the alpha subunit. The type of nucleotide bound at the specificity site determines substrate preference. It seems probable that ATP makes the enzyme reduce CDP and UDP, dGTP favors ADP reduction and dTTP favors GDP reduction. Stimulated by ATP and inhibited by dATP binding to the activity site. Functionally, provides the precursors necessary for DNA synthesis. Catalyzes the biosynthesis of deoxyribonucleotides from the corresponding ribonucleotides. The polypeptide is Ribonucleoside-diphosphate reductase subunit alpha (nrdA) (Haemophilus influenzae (strain ATCC 51907 / DSM 11121 / KW20 / Rd)).